The following is a 695-amino-acid chain: Elongation factor G (695 aa).

The tr-type G domain maps to 10–285; that stretch reads DKTRNIGIMA…GVVDYLPSPL (276 aa). Residues 19–26, 83–87, and 137–140 contribute to the GTP site; these read AHIDAGKT, DTPGH, and NKMD.

The protein belongs to the TRAFAC class translation factor GTPase superfamily. Classic translation factor GTPase family. EF-G/EF-2 subfamily.

It localises to the cytoplasm. In terms of biological role, catalyzes the GTP-dependent ribosomal translocation step during translation elongation. During this step, the ribosome changes from the pre-translocational (PRE) to the post-translocational (POST) state as the newly formed A-site-bound peptidyl-tRNA and P-site-bound deacylated tRNA move to the P and E sites, respectively. Catalyzes the coordinated movement of the two tRNA molecules, the mRNA and conformational changes in the ribosome. The polypeptide is Elongation factor G (Latilactobacillus sakei subsp. sakei (strain 23K) (Lactobacillus sakei subsp. sakei)).